The chain runs to 593 residues: Pentatricopeptide repeat-containing protein At5g24830 (593 aa).

PPR repeat units follow at residues 120-154 (CLSIHSSIMRDLCLQGKLDAALWLRKKMIYSGVIP), 155-189 (GLITHNHLLNGLCKAGYIEKADGLVREMREMGPSP), 190-224 (NCVSYNTLIKGLCSVNNVDKALYLFNTMNKYGIRP), 225-256 (NRVTCNIIVHALCQKGVIGNNNKKLLEEILDS), 264-298 (DIVICTILMDSCFKNGNVVQALEVWKEMSQKNVPA), 299-333 (DSVVYNVIIRGLCSSGNMVAAYGFMCDMVKRGVNP), 334-368 (DVFTYNTLISALCKEGKFDEACDLHGTMQNGGVAP), 369-403 (DQISYKVIIQGLCIHGDVNRANEFLLSMLKSSLLP), 404-438 (EVLLWNVVIDGYGRYGDTSSALSVLNLMLSYGVKP), 439-473 (NVYTNNALIHGYVKGGRLIDAWWVKNEMRSTKIHP), 474-508 (DTTTYNLLLGAACTLGHLRLAFQLYDEMLRRGCQP), and 509-543 (DIITYTELVRGLCWKGRLKKAESLLSRIQATGITI).

This sequence belongs to the PPR family. P subfamily.

The chain is Pentatricopeptide repeat-containing protein At5g24830 from Arabidopsis thaliana (Mouse-ear cress).